The chain runs to 687 residues: Polyphosphate kinase (687 aa).

Residue asparagine 45 participates in ATP binding. Mg(2+)-binding residues include arginine 375 and arginine 405. Residue histidine 435 is the Phosphohistidine intermediate of the active site. The ATP site is built by tyrosine 472, arginine 568, and histidine 596.

Belongs to the polyphosphate kinase 1 (PPK1) family. It depends on Mg(2+) as a cofactor. In terms of processing, an intermediate of this reaction is the autophosphorylated ppk in which a phosphate is covalently linked to a histidine residue through a N-P bond.

The enzyme catalyses [phosphate](n) + ATP = [phosphate](n+1) + ADP. Its function is as follows. Catalyzes the reversible transfer of the terminal phosphate of ATP to form a long-chain polyphosphate (polyP). The polypeptide is Polyphosphate kinase (Burkholderia cenocepacia (strain HI2424)).